A 245-amino-acid polypeptide reads, in one-letter code: MSQSGSVLRRNGFTFKQFFVAHDRCAMKVGTDGILLGAWAPVADVKRILDIGTGSGLLALMLAQRTDDNVPIDAVELDAGAAMQAQENVAHSPWPHRITVHTDDIQSWAPRQTVRFDLIISNPPYYEPGVECATPQREQARYTATLDHQTLLAIAADCITEDGFFCVVLPEQIGNAFTQQALNMGWHLRLRTDVAENEARLPHRVLLAFSPQAGECFSDRLVIRGSDQHYSESYTALTQAFYLFM.

This sequence belongs to the methyltransferase superfamily. tRNA (adenine-N(6)-)-methyltransferase family.

The protein localises to the cytoplasm. It catalyses the reaction adenosine(37) in tRNA1(Val) + S-adenosyl-L-methionine = N(6)-methyladenosine(37) in tRNA1(Val) + S-adenosyl-L-homocysteine + H(+). Specifically methylates the adenine in position 37 of tRNA(1)(Val) (anticodon cmo5UAC). The chain is tRNA1(Val) (adenine(37)-N6)-methyltransferase from Salmonella enteritidis PT4 (strain P125109).